The sequence spans 85 residues: DNA-directed RNA polymerase subunit omega (85 aa).

The protein belongs to the RNA polymerase subunit omega family. As to quaternary structure, the RNAP catalytic core consists of 2 alpha, 1 beta, 1 beta' and 1 omega subunit. When a sigma factor is associated with the core the holoenzyme is formed, which can initiate transcription.

It carries out the reaction RNA(n) + a ribonucleoside 5'-triphosphate = RNA(n+1) + diphosphate. Promotes RNA polymerase assembly. Latches the N- and C-terminal regions of the beta' subunit thereby facilitating its interaction with the beta and alpha subunits. The chain is DNA-directed RNA polymerase subunit omega from Tropheryma whipplei (strain TW08/27) (Whipple's bacillus).